The sequence spans 622 residues: Low affinity potassium transport system protein Kup (622 aa).

Transmembrane regions (helical) follow at residues 9 to 29, 49 to 69, 103 to 123, 137 to 157, 165 to 185, 213 to 233, 247 to 267, 276 to 296, 337 to 357, 363 to 383, 396 to 416, and 419 to 439; these read LPAI…TSPL, VFGF…IKYL, VIMG…TPAI, PQLD…LFMI, VGKL…VLGL, VSFI…ALYA, WFTV…ALLL, PFFL…AALA, IYIP…IVSF, LAAA…ILST, FVAL…SANL, and LLSG…IMTT.

The protein belongs to the HAK/KUP transporter (TC 2.A.72) family.

It is found in the cell inner membrane. It carries out the reaction K(+)(in) + H(+)(in) = K(+)(out) + H(+)(out). Its function is as follows. Responsible for the low-affinity transport of potassium into the cell. Likely operates as a K(+):H(+) symporter. The sequence is that of Low affinity potassium transport system protein Kup from Salmonella typhi.